Reading from the N-terminus, the 202-residue chain is 3-isopropylmalate dehydratase small subunit (202 aa).

The protein belongs to the LeuD family. LeuD type 1 subfamily. In terms of assembly, heterodimer of LeuC and LeuD.

The enzyme catalyses (2R,3S)-3-isopropylmalate = (2S)-2-isopropylmalate. The protein operates within amino-acid biosynthesis; L-leucine biosynthesis; L-leucine from 3-methyl-2-oxobutanoate: step 2/4. Functionally, catalyzes the isomerization between 2-isopropylmalate and 3-isopropylmalate, via the formation of 2-isopropylmaleate. This chain is 3-isopropylmalate dehydratase small subunit, found in Caulobacter vibrioides (strain ATCC 19089 / CIP 103742 / CB 15) (Caulobacter crescentus).